The chain runs to 413 residues: Protein PHR1-LIKE 1 (413 aa).

Disordered regions lie at residues 171-196 and 208-233; these read SEPNWSELLGDSSSHNPNSEIPTPFL and QQQMVSSEDQLSGRNSSSSVATSKQR. Composition is skewed to polar residues over residues 181–191 and 208–231; these read DSSSHNPNSEI and QQQMVSSEDQLSGRNSSSSVATSK. The region spanning 228–288 is the HTH myb-type domain; sequence ATSKQRMRWT…HLQKYRTARY (61 aa). The H-T-H motif DNA-binding region spans 259-284; sequence PKAVLKLLNNPGLTIYHVKSHLQKYR. The segment at 322-342 is coiled coil; it reads TQALRLQMEVQKRLHEQLEIQ. An LHEQLE motif is present at residues 335–340; sequence LHEQLE. The tract at residues 363–413 is disordered; that stretch reads QQKIQDNKSSSSEASPKQCNGSFAEVEVGLETLTGDQNESASASRKRVRED. Polar residues-rich tracts occupy residues 369 to 383 and 396 to 405; these read NKSSSSEASPKQCNG and TGDQNESASA.

The protein belongs to the MYB-CC family. In terms of assembly, homodimers and heterodimers. Interacts with MED25. Does not interact with PHL2 or PHL3. In terms of tissue distribution, expressed in shoots and roots.

The protein resides in the nucleus. Its function is as follows. Transcription factor acting as central integrator of phosphate starvation responses. Regulates FER1 expression upon phosphate starvation, linking iron and phosphate homeostasis. The protein is Protein PHR1-LIKE 1 (PHL1) of Arabidopsis thaliana (Mouse-ear cress).